A 74-amino-acid polypeptide reads, in one-letter code: Small, acid-soluble spore protein Tlp (74 aa).

Residues 38-74 (AEELSSKEKDELSSKNERRKESVDGLRSEIKDEADSQ) are disordered.

Belongs to the Tlp family.

The protein localises to the spore core. This chain is Small, acid-soluble spore protein Tlp, found in Oceanobacillus iheyensis (strain DSM 14371 / CIP 107618 / JCM 11309 / KCTC 3954 / HTE831).